The following is a 78-amino-acid chain: Antitoxin FitA (78 aa).

In terms of assembly, homodimer in the absence of FitB; forms a heterodimer with FitB; 4 FitAB heterodimers form a complex that binds to fitAB promoter DNA. The complex is also seen in solution.

Functionally, antitoxin component of a type II toxin-antitoxin (TA) system. Plays a role in the speed with which bacteria traverse human epithelial cells; disruption of the locus increases the speed of trafficking about 2-4-fold. Binds to its own promoter, binding affinity of the FitAB complex is 20-30-fold higher than FitA alone. No nuclease activity was observed for the FitAB complex, perhaps because FitA (the antitoxin) prevents metal binding and thus catalysis by FitB. This Neisseria gonorrhoeae (strain ATCC 700825 / FA 1090) protein is Antitoxin FitA (fitA).